The chain runs to 288 residues: uncharacterized protein (288 aa).

The HTH rpiR-type domain maps to 5-81; that stretch reads GNVLNKIGSL…LELSIELATK (77 aa). The H-T-H motif DNA-binding region spans 41 to 60; sequence LSEIAKHLQVGEATLVRFCR. One can recognise an SIS domain in the interval 129-269; sequence VVKVLKKARR…YALLVQGEED (141 aa).

This is an uncharacterized protein from Haemophilus influenzae (strain ATCC 51907 / DSM 11121 / KW20 / Rd).